Consider the following 252-residue polypeptide: Large ribosomal subunit protein uL4 (252 aa).

The protein belongs to the universal ribosomal protein uL4 family. In terms of assembly, part of the 50S ribosomal subunit.

In terms of biological role, one of the primary rRNA binding proteins, this protein initially binds near the 5'-end of the 23S rRNA. It is important during the early stages of 50S assembly. It makes multiple contacts with different domains of the 23S rRNA in the assembled 50S subunit and ribosome. Its function is as follows. Forms part of the polypeptide exit tunnel. The chain is Large ribosomal subunit protein uL4 from Methanococcus maripaludis (strain C7 / ATCC BAA-1331).